We begin with the raw amino-acid sequence, 1719 residues long: 5'-3' exoribonuclease 1 (1719 aa).

The segment covering 1268 to 1298 (HKSGFTDHSVRHQQRKHDSQRKFKEEYKSPK) has biased composition (basic and acidic residues). Positions 1268-1317 (HKSGFTDHSVRHQQRKHDSQRKFKEEYKSPKAECQSQKLSSKQTSGGSAR) are disordered. Positions 1301-1314 (CQSQKLSSKQTSGG) are enriched in polar residues. Serine 1382 bears the Phosphoserine mark. Residues 1397–1430 (ILKIDSPDTRDSKNDMKKSDNEATVSSRRDERGV) show a composition bias toward basic and acidic residues. Disordered regions lie at residues 1397 to 1445 (ILKI…KPHG) and 1634 to 1719 (ENKE…KPSE). The span at 1638–1660 (AQSSQATPLQTNKPGSSEATKMT) shows a compositional bias: polar residues. Positions 1661–1680 (PQESPPASSSSSQAAQPVSS) are enriched in low complexity. Residues 1681 to 1690 (HVETASQGHV) are compositionally biased toward polar residues.

This sequence belongs to the 5'-3' exonuclease family. Found in a mRNP complex with UPF1, UPF2, UPF3B and XRN1. Associates with alpha and beta tubulins. Interacts with DIS3L2. Interacts with ZC3HAV1 in an RNA-dependent manner. Interacts with ZFP36L1. Interacts with TRIM71 (via NHL repeats) in an RNA-dependent manner. Interacts with YTHDC2 (via ANK repeats). Interacts with DHX34; the interaction is RNA-independent. Expressed in heart, brain (spinal cord, dorsal root and superior cervical ganglia, neurons of the cerebrum and brain stem), peripheral nerve fibers in the skin and intestine, spleen, lung, liver, skeletal muscle, kidney and testis.

Its subcellular location is the cytoplasm. Its function is as follows. Major 5'-3' exoribonuclease involved in mRNA decay. Required for the 5'-3'-processing of the G4 tetraplex-containing DNA and RNA substrates. The kinetic of hydrolysis is faster for G4 RNA tetraplex than for G4 DNA tetraplex and monomeric RNA tetraplex. Binds to RNA and DNA. Plays a role in replication-dependent histone mRNA degradation. This chain is 5'-3' exoribonuclease 1, found in Mus musculus (Mouse).